A 711-amino-acid polypeptide reads, in one-letter code: Catalase HPII (711 aa).

Residues 1–10 show a composition bias toward basic and acidic residues; that stretch reads MPSKKTDAPK. The segment at 1-27 is disordered; that stretch reads MPSKKTDAPKQSEAAGTQTPDRANTNA. Residues 14 to 27 show a composition bias toward polar residues; sequence AAGTQTPDRANTNA. Catalysis depends on residues His-92 and Asn-165. Tyr-379 contributes to the heme binding site.

The protein belongs to the catalase family. HPII subfamily. Requires heme as cofactor.

It localises to the cytoplasm. The enzyme catalyses 2 H2O2 = O2 + 2 H2O. Its function is as follows. Decomposes hydrogen peroxide into water and oxygen; serves to protect cells from the toxic effects of hydrogen peroxide. This chain is Catalase HPII (katE), found in Pseudomonas putida (Arthrobacter siderocapsulatus).